A 51-amino-acid polypeptide reads, in one-letter code: Large ribosomal subunit protein bL33 (51 aa).

It belongs to the bacterial ribosomal protein bL33 family. In terms of assembly, part of the 50S ribosomal subunit. Cross-links to the P and E site tRNAs.

The polypeptide is Large ribosomal subunit protein bL33 (Pseudomonas aeruginosa (strain ATCC 15692 / DSM 22644 / CIP 104116 / JCM 14847 / LMG 12228 / 1C / PRS 101 / PAO1)).